Consider the following 474-residue polypeptide: tRNA modification GTPase MnmE (474 aa).

(6S)-5-formyl-5,6,7,8-tetrahydrofolate is bound by residues Arg-25, Glu-82, and Lys-123. Positions 219–386 constitute a TrmE-type G domain; the sequence is GIKVVIAGKP…LKKHLYDSAM (168 aa). Asn-229 is a K(+) binding site. GTP is bound by residues 229–234, 248–254, and 273–276; these read NAGKSS, SNISGTT, and DTAG. Ser-233 contacts Mg(2+). K(+) contacts are provided by Ser-248, Ile-250, and Thr-253. Residue Thr-254 coordinates Mg(2+). Lys-474 is a binding site for (6S)-5-formyl-5,6,7,8-tetrahydrofolate.

Belongs to the TRAFAC class TrmE-Era-EngA-EngB-Septin-like GTPase superfamily. TrmE GTPase family. Homodimer. Heterotetramer of two MnmE and two MnmG subunits. K(+) serves as cofactor.

The protein resides in the cytoplasm. In terms of biological role, exhibits a very high intrinsic GTPase hydrolysis rate. Involved in the addition of a carboxymethylaminomethyl (cmnm) group at the wobble position (U34) of certain tRNAs, forming tRNA-cmnm(5)s(2)U34. The polypeptide is tRNA modification GTPase MnmE (Blochmanniella floridana).